We begin with the raw amino-acid sequence, 678 residues long: Vacuolar fusion protein mon1 (678 aa).

Disordered stretches follow at residues 1–116, 449–474, and 568–591; these read MDRD…YTSP, EENNSNNTNNPEQPPQPPPPKPVTSP, and FETSSPPLPSSSPSENGSSQKTTE. A compositionally biased stretch (low complexity) spans 10 to 20; it reads NDGTNDNNDTT. A compositionally biased stretch (polar residues) spans 63–77; sequence RPTTQVSTIDISTLS. The segment covering 87-105 has biased composition (low complexity); the sequence is STSATSATSATSATRSVAS. Residues 106–116 show a composition bias toward polar residues; the sequence is PQSSASGYTSP. Residues 450-459 are compositionally biased toward low complexity; that stretch reads ENNSNNTNNP. Residues 460–471 show a composition bias toward pro residues; the sequence is EQPPQPPPPKPV.

This sequence belongs to the MON1/SAND family.

Its subcellular location is the endosome. The protein resides in the multivesicular body membrane. It localises to the prevacuolar compartment membrane. The protein localises to the vacuole membrane. Its function is as follows. In complex with CCZ1, is required for multiple vacuole delivery pathways including the cytoplasm to vacuole transport (Cvt), autophagy, pexophagy and endocytosis. The MON1-CCZ1 complex acts at the fusion of vesicles with the vacuole, through its regulation of the SNARE complex during the coordinated priming and docking stages of fusion, and particularly at the stage of tethering/docking. The sequence is that of Vacuolar fusion protein mon1 (apg-13) from Neurospora crassa (strain ATCC 24698 / 74-OR23-1A / CBS 708.71 / DSM 1257 / FGSC 987).